Consider the following 701-residue polypeptide: Centrosomal protein of 83 kDa (701 aa).

The segment covering 1 to 14 (MVVSTFTDMDTFPN) has biased composition (polar residues). The tract at residues 1-23 (MVVSTFTDMDTFPNNFPPGGDSG) is disordered. 2 coiled-coil regions span residues 40–634 (LRCE…SLIL) and 665–698 (HMQEEQHQRELSLLRKRLEELETTQRKQLEELGS). Phosphoserine is present on Ser-698.

It belongs to the CEP83 family. In terms of assembly, interacts with CEP164 and IFT20.

The protein resides in the cytoplasm. Its subcellular location is the cytoskeleton. It is found in the microtubule organizing center. The protein localises to the centrosome. It localises to the centriole. In terms of biological role, component of the distal appendage region of the centriole involved in the initiation of primary cilium assembly. May collaborate with IFT20 in the trafficking of ciliary membrane proteins from the Golgi complex to the cilium during the initiation of primary cilium assembly. This Homo sapiens (Human) protein is Centrosomal protein of 83 kDa (CEP83).